A 345-amino-acid polypeptide reads, in one-letter code: Tropomodulin-4 (345 aa).

Positions 42–63 (NMLLPAGLRQRDQTKKSPTGPL) are disordered.

This sequence belongs to the tropomodulin family. Binds to the N-terminus of tropomyosin and to actin.

Its subcellular location is the cytoplasm. The protein resides in the cytoskeleton. Functionally, blocks the elongation and depolymerization of the actin filaments at the pointed end. The Tmod/TM complex contributes to the formation of the short actin protofilament, which in turn defines the geometry of the membrane skeleton. In Bos taurus (Bovine), this protein is Tropomodulin-4 (TMOD4).